The chain runs to 510 residues: NAD(P)H-quinone oxidoreductase subunit 2 B, chloroplastic (510 aa).

The next 12 helical transmembrane spans lie at 24–44 (LLLF…GLIL), 59–79 (WFYF…LFRW), 99–119 (IFQF…VEYI), 124–144 (MAIT…MFLC), 149–169 (LITI…LSGY), 183–203 (YLLM…WLYG), 229–249 (ISIA…PAPF), 295–315 (WHLL…LLAI), 323–343 (MLAY…IVGD), 354–374 (YMLF…LFGL), 395–415 (ALSL…AGFF), and 418–438 (LYLF…IGLL).

It belongs to the complex I subunit 2 family. In terms of assembly, NDH is composed of at least 16 different subunits, 5 of which are encoded in the nucleus.

It localises to the plastid. Its subcellular location is the chloroplast thylakoid membrane. The enzyme catalyses a plastoquinone + NADH + (n+1) H(+)(in) = a plastoquinol + NAD(+) + n H(+)(out). It carries out the reaction a plastoquinone + NADPH + (n+1) H(+)(in) = a plastoquinol + NADP(+) + n H(+)(out). NDH shuttles electrons from NAD(P)H:plastoquinone, via FMN and iron-sulfur (Fe-S) centers, to quinones in the photosynthetic chain and possibly in a chloroplast respiratory chain. The immediate electron acceptor for the enzyme in this species is believed to be plastoquinone. Couples the redox reaction to proton translocation, and thus conserves the redox energy in a proton gradient. The polypeptide is NAD(P)H-quinone oxidoreductase subunit 2 B, chloroplastic (Agrostis stolonifera (Creeping bentgrass)).